A 199-amino-acid chain; its full sequence is FMN-dependent NADH:quinone oxidoreductase (199 aa).

17-19 contacts FMN; the sequence is SYS.

This sequence belongs to the azoreductase type 1 family. As to quaternary structure, homodimer. Requires FMN as cofactor.

The enzyme catalyses 2 a quinone + NADH + H(+) = 2 a 1,4-benzosemiquinone + NAD(+). It carries out the reaction N,N-dimethyl-1,4-phenylenediamine + anthranilate + 2 NAD(+) = 2-(4-dimethylaminophenyl)diazenylbenzoate + 2 NADH + 2 H(+). Quinone reductase that provides resistance to thiol-specific stress caused by electrophilic quinones. In terms of biological role, also exhibits azoreductase activity. Catalyzes the reductive cleavage of the azo bond in aromatic azo compounds to the corresponding amines. This is FMN-dependent NADH:quinone oxidoreductase from Mycoplasmopsis synoviae (strain 53) (Mycoplasma synoviae).